The chain runs to 85 residues: Putative membrane protein insertion efficiency factor (85 aa).

Residues 62 to 85 (PLGSDGYDPVPEPKDRKPPHSPAG) are disordered.

The protein belongs to the UPF0161 family.

The protein localises to the cell inner membrane. Its function is as follows. Could be involved in insertion of integral membrane proteins into the membrane. The sequence is that of Putative membrane protein insertion efficiency factor from Ruegeria pomeroyi (strain ATCC 700808 / DSM 15171 / DSS-3) (Silicibacter pomeroyi).